The sequence spans 87 residues: Elastase inhibitor AFLEI (87 aa).

An N-terminal signal peptide occupies residues 1 to 19 (MKFSLACLLALAGLQAALA). Cysteines 24 and 86 form a disulfide.

It is found in the secreted. Functionally, elastase inhibitor. The protein is Elastase inhibitor AFLEI of Aspergillus fumigatus (strain CBS 144.89 / FGSC A1163 / CEA10) (Neosartorya fumigata).